Here is a 291-residue protein sequence, read N- to C-terminus: ATP synthase gamma chain (291 aa).

This sequence belongs to the ATPase gamma chain family. In terms of assembly, F-type ATPases have 2 components, CF(1) - the catalytic core - and CF(0) - the membrane proton channel. CF(1) has five subunits: alpha(3), beta(3), gamma(1), delta(1), epsilon(1). CF(0) has three main subunits: a, b and c.

It is found in the cell inner membrane. Functionally, produces ATP from ADP in the presence of a proton gradient across the membrane. The gamma chain is believed to be important in regulating ATPase activity and the flow of protons through the CF(0) complex. The chain is ATP synthase gamma chain from Methylibium petroleiphilum (strain ATCC BAA-1232 / LMG 22953 / PM1).